An 843-amino-acid chain; its full sequence is MTVTTSTPSGGGAAAVPPEDLVTLTIDGAEISVPKGTLVIRAAEQLGIEIPRFCDHPLLDPAGACRQCIVEVEGQRKPMASCTITCTDGMVVKTQLTSPVAEKAQHGVMELLLINHPLDCPVCDKGGECPLQNQAMSHGQSDSRFEGKKRTYEKPVPISTQVLLDRERCVLCARCTRFSNQVAGDPMIELIERGALQQVGTGEGDPFESYFSGNTIQICPVGALTSAAYRFRSRPFDLISSPSVCEHCSGGCATRTDHRRGKVMRRLAANEPEVNEEWICDKGRFGFRYAQQRDRLTTPLVRNAEGELEPASWPEALQIAAQGLLASRGRTGVLTGGRLTVEDAYAYSKFARVALDTNDIDFRARVHSAEEADFLAAHVAGRGRDLGGSSRTESGGGAGVTYTSLEKAPAVLLVGFEAEEEAPGVFLRLRKAWRKHGQKVFSLATHATRGLEKAGGTLLPAAPGTETEWLDALASGVGLEEGGTQAAEALRAEGAVIVVGERLASVAGGLTSAVRTSAATGARLVWIPRRAGERGAIEAGALPSLLPGGRPATDPRAREEVAALWGLADLPHRYGRDTGEIVEAAARGELQALLVAGVEVADLPDPTRARAALDEAGFVVSLELRPSEVSERADVVLPVAAVAEKPGTFLNWEGRVRFFEAALKPDQMTRRLAPTDARVLQMLADAMDVHLGLPDLRTTRAEIDRLGAWDGPRAGEPLQTASALPRPAAGEAVLAGHRLLLDQGLLQQGDEALAGTRHAARARLSAATAAEAGVKDGDVLAVTGPAGAVELPLQVTEMPDRVVWLPLNSAGSGVASDAGVLPGTLVRIGPATPAGAAPKEVEA.

One can recognise a 2Fe-2S ferredoxin-type domain in the interval 20–98 (DLVTLTIDGA…GMVVKTQLTS (79 aa)). [2Fe-2S] cluster is bound by residues C54, C65, C68, and C82. The region spanning 100–139 (VAEKAQHGVMELLLINHPLDCPVCDKGGECPLQNQAMSHG) is the 4Fe-4S His(Cys)3-ligated-type domain. H116, C120, C123, C129, C169, C172, C175, C219, C245, C248, C252, and C280 together coordinate [4Fe-4S] cluster. In terms of domain architecture, 4Fe-4S Mo/W bis-MGD-type spans 238–294 (LISSPSVCEHCSGGCATRTDHRRGKVMRRLAANEPEVNEEWICDKGRFGFRYAQQRD).

The protein belongs to the complex I 75 kDa subunit family. [2Fe-2S] cluster is required as a cofactor. [4Fe-4S] cluster serves as cofactor.

It carries out the reaction a quinone + NADH + 5 H(+)(in) = a quinol + NAD(+) + 4 H(+)(out). Functionally, NDH-1 shuttles electrons from NADH, via FMN and iron-sulfur (Fe-S) centers, to quinones in the respiratory chain. Couples the redox reaction to proton translocation (for every two electrons transferred, four hydrogen ions are translocated across the cytoplasmic membrane), and thus conserves the redox energy in a proton gradient. The chain is NADH-quinone oxidoreductase subunit G (nuoG) from Streptomyces coelicolor (strain ATCC BAA-471 / A3(2) / M145).